Reading from the N-terminus, the 301-residue chain is NADH-cytochrome b5 reductase 3 (301 aa).

A lipid anchor (N-myristoyl glycine) is attached at glycine 2. The FAD-binding FR-type domain maps to 40–152 (DIKYPLRLID…RGPNGLLVYQ (113 aa)). Lysine 42 carries the N6-acetyllysine modification. Tyrosine 43 is subject to Phosphotyrosine. At lysine 50 the chain carries N6-acetyllysine. FAD contacts are provided by arginine 92, proline 93, tyrosine 94, valine 109, lysine 111, and phenylalanine 114. Lysine 120 is modified (N6-acetyllysine). FAD is bound by residues lysine 126, methionine 127, serine 128, and threonine 185.

It belongs to the flavoprotein pyridine nucleotide cytochrome reductase family. Component of a complex composed of cytochrome b5, NADH-cytochrome b5 reductase (CYB5R3) and MTARC2. Interacts with MTLN; the interaction is required to maintain cellular lipid composition and leads to stimulation of mitochondrial respiratory complex I activity. It depends on FAD as a cofactor.

The protein localises to the endoplasmic reticulum membrane. It is found in the mitochondrion outer membrane. The catalysed reaction is 2 Fe(III)-[cytochrome b5] + NADH = 2 Fe(II)-[cytochrome b5] + NAD(+) + H(+). Functionally, catalyzes the reduction of two molecules of cytochrome b5 using NADH as the electron donor. This Bos taurus (Bovine) protein is NADH-cytochrome b5 reductase 3 (CYB5R3).